The primary structure comprises 203 residues: MAEKLKGTTTVGIVCKDGVVLAADRRASLGNMVLSKEVTKVFQIDDHLALAGAGSVGDILSLVRLLRAEVKLYRAKVGREISVKALATLTSNILHGSRFMPYFGWFLIAGYDEKPALYSLDMAGGVTEDKFTAAGSGMELAFAVLEDGYKDDINVEEGVKLALKAIKIATRRDVFTGDGITLVTVTEEGYRELNREEIEALLK.

Residues 1–7 constitute a propeptide, removed in mature form; by autocatalysis; that stretch reads MAEKLKG. Thr8 acts as the Nucleophile in catalysis.

Belongs to the peptidase T1B family. In terms of assembly, the 20S proteasome core is composed of 14 alpha and 14 beta subunits that assemble into four stacked heptameric rings, resulting in a barrel-shaped structure. The two inner rings, each composed of seven catalytic beta subunits, are sandwiched by two outer rings, each composed of seven alpha subunits. The catalytic chamber with the active sites is on the inside of the barrel. Has a gated structure, the ends of the cylinder being occluded by the N-termini of the alpha-subunits. Is capped at one or both ends by the proteasome regulatory ATPase, PAN.

Its subcellular location is the cytoplasm. It carries out the reaction Cleavage of peptide bonds with very broad specificity.. Its activity is regulated as follows. The formation of the proteasomal ATPase PAN-20S proteasome complex, via the docking of the C-termini of PAN into the intersubunit pockets in the alpha-rings, triggers opening of the gate for substrate entry. Interconversion between the open-gate and close-gate conformations leads to a dynamic regulation of the 20S proteasome proteolysis activity. Functionally, component of the proteasome core, a large protease complex with broad specificity involved in protein degradation. This chain is Proteasome subunit beta 1, found in Thermococcus onnurineus (strain NA1).